The primary structure comprises 173 residues: Shikimate kinase (173 aa).

14 to 19 (GAGKST) lines the ATP pocket. Ser18 contributes to the Mg(2+) binding site. Substrate is bound by residues Asp36, Arg60, and Gly82. Lys120 provides a ligand contact to ATP. A substrate-binding site is contributed by Arg140.

The protein belongs to the shikimate kinase family. Monomer. Mg(2+) is required as a cofactor.

Its subcellular location is the cytoplasm. The catalysed reaction is shikimate + ATP = 3-phosphoshikimate + ADP + H(+). It participates in metabolic intermediate biosynthesis; chorismate biosynthesis; chorismate from D-erythrose 4-phosphate and phosphoenolpyruvate: step 5/7. In terms of biological role, catalyzes the specific phosphorylation of the 3-hydroxyl group of shikimic acid using ATP as a cosubstrate. The chain is Shikimate kinase (aroK) from Wigglesworthia glossinidia brevipalpis.